The following is a 187-amino-acid chain: Troponin I, slow skeletal muscle (187 aa).

Position 2 is an N-acetylproline (proline 2). An involved in binding TNC region spans residues 2–48; it reads PEVERKPKITASRKLLLKSLMLAKAKECWEQEHEEREAEKVRYLAER. A Phosphoserine modification is found at serine 58. Residues 97–118 form an involved in binding TNC and actin region; the sequence is LKLKVMDLRGKFKRPPLRRVRV.

It belongs to the troponin I family. As to quaternary structure, binds to actin and tropomyosin. In terms of tissue distribution, highest levels observed in human skeletal muscle (e.g. gastrocnemious muscle), differentiated cultures of primary human muscle cells and rhabdomyosarcoma cells cultured in low serum medium. Expressed in C2 muscle cell myoblasts and myotubes.

Troponin I is the inhibitory subunit of troponin, the thin filament regulatory complex which confers calcium-sensitivity to striated muscle actomyosin ATPase activity. The sequence is that of Troponin I, slow skeletal muscle (TNNI1) from Homo sapiens (Human).